The sequence spans 476 residues: Flavin-dependent halogenase otaD (476 aa).

FAD contacts are provided by G14 and G17. Positions 304 and 305 each coordinate chloride. An FAD-binding site is contributed by V306.

Belongs to the flavin-dependent halogenase family.

The catalysed reaction is ochratoxin B + FADH2 + chloride + O2 = ochratoxin A + FAD + 2 H2O. It participates in mycotoxin biosynthesis. In terms of biological role, flavin-dependent halogenase; part of the gene cluster that mediates the biosynthesis of ochratoxin A (OTA), a mycotoxin composed of a chlorinated type I polyketide dihydroisocoumarin moiety linked to L-phenylalanine, and demonstrated to have nephrotoxic, immunotoxic, genotoxic, neurotoxic, and teratogenic properties. OtaD chlorinates ochratoxin B (OTB) at the C-5 position to form OTA. The pathway begins with the highly reducing polyketide synthase otaA that catalyzes the formation of the isocoumarin group during the initial stages of biosynthesis, starting from one acetate and 4 malonate units, to originate the characteristic pentaketide skeleton 7-methylmellein (7-MM) of the OTA molecule. The newly identified cyclase otaY might be involved in the polyketide cyclization reaction during the initial steps of the OTA biosynthesis. 7-MM is then oxidized into 7-carboxymellein (also called ochratoxin beta) by the cytochrome P450 monooxygenase otaC. The NRPS encoded by the otaB gene is involved in the linking of phenylalanine to the dihydroisocoumarin ring. The reaction catalyzed by NRPS results in the production of ochratoxin B (OTB), which is the non-chlorinated analog of OTA and which subsequently serves as the substrate of the halogenase otaD for chlorination activity to form the final molecular structure of OTA, containing a chlorine atom in the C-5 position of the molecule. This chain is Flavin-dependent halogenase otaD, found in Aspergillus niger (strain ATCC MYA-4892 / CBS 513.88 / FGSC A1513).